A 395-amino-acid chain; its full sequence is D-serine dehydratase (395 aa).

Lysine 46 is modified (N6-(pyridoxal phosphate)lysine). 5 residues coordinate pyridoxal 5'-phosphate: tyrosine 184, tyrosine 191, threonine 232, glycine 254, and asparagine 255. Zn(2+) is bound by residues histidine 365 and cysteine 367.

This sequence belongs to the DSD1 family. The cofactor is pyridoxal 5'-phosphate. It depends on Zn(2+) as a cofactor.

It carries out the reaction D-serine = pyruvate + NH4(+). Its function is as follows. Catalyzes the conversion of D-serine to pyruvate and ammonia. Plays a role in D-serine detoxification. This Dictyostelium discoideum (Social amoeba) protein is D-serine dehydratase.